The following is a 60-amino-acid chain: Temporin-MT5 (60 aa).

An N-terminal signal peptide occupies residues 1-22 (MFTLKKPLLLLFFLATINLSLC). A propeptide spans 23 to 44 (EQERNAEEERRDEPDERNAEVE) (removed in mature form). At Phe58 the chain carries Phenylalanine amide.

This sequence belongs to the frog skin active peptide (FSAP) family. Temporin subfamily. Expressed by the skin glands.

It localises to the secreted. Antimicrobial peptide. The protein is Temporin-MT5 of Amolops mantzorum (Sichuan torrent frog).